Here is a 32-residue protein sequence, read N- to C-terminus: Cytochrome b6-f complex subunit 7 (32 aa).

A helical transmembrane segment spans residues 5–25; the sequence is IFGTAAIFWVLIPAGLLGGAL.

Belongs to the PetM family. The 4 large subunits of the cytochrome b6-f complex are cytochrome b6, subunit IV (17 kDa polypeptide, PetD), cytochrome f and the Rieske protein, while the 4 small subunits are PetG, PetL, PetM and PetN. The complex functions as a dimer.

The protein resides in the cellular thylakoid membrane. Functionally, component of the cytochrome b6-f complex, which mediates electron transfer between photosystem II (PSII) and photosystem I (PSI), cyclic electron flow around PSI, and state transitions. The sequence is that of Cytochrome b6-f complex subunit 7 from Prochlorococcus marinus (strain SARG / CCMP1375 / SS120).